Here is a 487-residue protein sequence, read N- to C-terminus: Cysteine--tRNA ligase (487 aa).

C29 lines the Zn(2+) pocket. The 'HIGH' region signature appears at 31–41; sequence VTVYDFCHIGH. Residues C209, H234, and E238 each coordinate Zn(2+). A 'KMSKS' region motif is present at residues 266 to 270; that stretch reads KMSKS. K269 is an ATP binding site.

This sequence belongs to the class-I aminoacyl-tRNA synthetase family. Monomer. Requires Zn(2+) as cofactor.

Its subcellular location is the cytoplasm. The enzyme catalyses tRNA(Cys) + L-cysteine + ATP = L-cysteinyl-tRNA(Cys) + AMP + diphosphate. The protein is Cysteine--tRNA ligase of Trichlorobacter lovleyi (strain ATCC BAA-1151 / DSM 17278 / SZ) (Geobacter lovleyi).